Consider the following 421-residue polypeptide: Mitochondrial tRNA-specific 2-thiouridylase 1 (421 aa).

Residues 10-17 (ALSGGVDS) and Met-36 each bind ATP. The interaction with target base in tRNA stretch occupies residues 96–98 (NPD). Cys-101 (nucleophile) is an active-site residue. A disulfide bridge links Cys-101 with Cys-222. Gly-126 contributes to the ATP binding site. The interval 171-173 (KDQ) is interaction with tRNA. Residue Cys-222 is the Cysteine persulfide intermediate of the active site. Positions 334-335 (RH) are interaction with tRNA. The disordered stretch occupies residues 395–421 (KGQRRAGMATESPSDSPEDGPGLSPLL).

This sequence belongs to the MnmA/TRMU family. In terms of tissue distribution, ubiquitous. Abundantly expressed in tissues with high metabolic rates including heart, liver, kidney, and brain.

It localises to the mitochondrion. The catalysed reaction is 5-taurinomethyluridine(34) in tRNA + S-sulfanyl-L-cysteinyl-[protein] + AH2 + ATP = 5-taurinomethyl-2-thiouridine(34) in tRNA + L-cysteinyl-[protein] + A + AMP + diphosphate + H(+). Functionally, catalyzes the 2-thiolation of uridine at the wobble position (U34) of mitochondrial tRNA(Lys), tRNA(Glu) and tRNA(Gln). Required for the formation of 5-taurinomethyl-2-thiouridine (tm5s2U) of mitochondrial tRNA(Lys), tRNA(Glu), and tRNA(Gln) at the wobble position. ATP is required to activate the C2 atom of the wobble base. The sequence is that of Mitochondrial tRNA-specific 2-thiouridylase 1 (TRMU) from Homo sapiens (Human).